Consider the following 156-residue polypeptide: SsrA-binding protein (156 aa).

The protein belongs to the SmpB family.

It localises to the cytoplasm. In terms of biological role, required for rescue of stalled ribosomes mediated by trans-translation. Binds to transfer-messenger RNA (tmRNA), required for stable association of tmRNA with ribosomes. tmRNA and SmpB together mimic tRNA shape, replacing the anticodon stem-loop with SmpB. tmRNA is encoded by the ssrA gene; the 2 termini fold to resemble tRNA(Ala) and it encodes a 'tag peptide', a short internal open reading frame. During trans-translation Ala-aminoacylated tmRNA acts like a tRNA, entering the A-site of stalled ribosomes, displacing the stalled mRNA. The ribosome then switches to translate the ORF on the tmRNA; the nascent peptide is terminated with the 'tag peptide' encoded by the tmRNA and targeted for degradation. The ribosome is freed to recommence translation, which seems to be the essential function of trans-translation. This is SsrA-binding protein from Paracoccus denitrificans (strain Pd 1222).